Consider the following 308-residue polypeptide: Homeobox protein HMX3 (308 aa).

Disordered regions lie at residues 1 to 57 (MPET…GFAL) and 107 to 184 (AEKS…KKKT). The span at 9 to 19 (PSAPPPPPPPK) shows a compositional bias: pro residues. Composition is skewed to basic and acidic residues over residues 135-144 (AEQKERDPKS) and 156-177 (EEGK…PEKK). A DNA-binding region (homeobox) is located at residues 181 to 240 (KKKTRTVFSRSQVFQLESTFDMKRYLSSSERAGLAASLHLTETQVKIWFQNRRNKWKRQL).

Belongs to the HMX homeobox family.

The protein localises to the nucleus. Transcription factor involved in specification of neuronal cell types and which is required for inner ear and hypothalamus development. Binds to the 5'-CAAGTG-3' core sequence. The sequence is that of Homeobox protein HMX3 (HMX3) from Gallus gallus (Chicken).